The following is a 199-amino-acid chain: Probable GTP-binding protein EngB (199 aa).

Residues 21-196 (TKPEYAFIGR…LTYIDEINKQ (176 aa)) enclose the EngB-type G domain. GTP contacts are provided by residues 29–36 (GRSNVGKS), 56–60 (GKTQL), 74–77 (DLPG), 141–144 (TKID), and 175–177 (TSS). Mg(2+) is bound by residues Ser36 and Thr58.

Belongs to the TRAFAC class TrmE-Era-EngA-EngB-Septin-like GTPase superfamily. EngB GTPase family. The cofactor is Mg(2+).

Functionally, necessary for normal cell division and for the maintenance of normal septation. This Cytophaga hutchinsonii (strain ATCC 33406 / DSM 1761 / CIP 103989 / NBRC 15051 / NCIMB 9469 / D465) protein is Probable GTP-binding protein EngB.